Reading from the N-terminus, the 234-residue chain is 2,3-bisphosphoglycerate-dependent phosphoglycerate mutase (234 aa).

Substrate-binding positions include 10–17 (RHGSSIWN), 23–24 (TG), arginine 62, 89–92 (ERHY), lysine 100, 116–117 (RR), and 186–187 (GN). Residue histidine 11 is the Tele-phosphohistidine intermediate of the active site. Glutamate 89 serves as the catalytic Proton donor/acceptor.

The protein belongs to the phosphoglycerate mutase family. BPG-dependent PGAM subfamily. Homodimer.

The catalysed reaction is (2R)-2-phosphoglycerate = (2R)-3-phosphoglycerate. The protein operates within carbohydrate degradation; glycolysis; pyruvate from D-glyceraldehyde 3-phosphate: step 3/5. In terms of biological role, catalyzes the interconversion of 2-phosphoglycerate and 3-phosphoglycerate. The polypeptide is 2,3-bisphosphoglycerate-dependent phosphoglycerate mutase (Wigglesworthia glossinidia brevipalpis).